Reading from the N-terminus, the 245-residue chain is MGAQRMQRTLLSLVLRLLLLCTVATGKCSGKYHELLLQLQRQADLMQDPSTLLDPYIHLQGLHSPVLQEHCRERPGDFPSEDALWRLSRQDFLQTLNTTLGLILRMLSALQQDLPEAAHQQAEMNVRGFGNNIHCMAQLLRGSSDPKAAEPTQPGPGPTPLPPTPPSSTFQRKLRNCGFLRGYHRFMRTAGQVLRGWGERQGRSRRHSPCRALKRGARRTQPFPEIRRLAPRGQPPGSLWGAPAR.

The N-terminal stretch at 1–26 (MGAQRMQRTLLSLVLRLLLLCTVATG) is a signal peptide. 2 disulfides stabilise this stretch: Cys28-Cys135 and Cys71-Cys177. Asn97 carries N-linked (GlcNAc...) asparagine glycosylation. 2 disordered regions span residues 143-171 (SSDP…STFQ) and 197-245 (WGER…APAR). Positions 153–166 (QPGPGPTPLPPTPP) are enriched in pro residues. Residues 203–218 (RSRRHSPCRALKRGAR) show a composition bias toward basic residues. The propeptide occupies 207 to 245 (HSPCRALKRGARRTQPFPEIRRLAPRGQPPGSLWGAPAR).

It belongs to the LIF/OSM family. In terms of processing, propeptide processing is not important for receptor binding activity but may be important growth-inhibitory activity.

Its subcellular location is the secreted. Functionally, growth regulator. Inhibits the proliferation of a number of tumor cell lines. It regulates cytokine production, including IL-6, G-CSF and GM-CSF from endothelial cells. Uses both type I OSM receptor (heterodimers composed of LIFR and IL6ST) and type II OSM receptor (heterodimers composed of OSMR and IL6ST). Involved in the maturation of fetal hepatocytes, thereby promoting liver development and regeneration. In Bos taurus (Bovine), this protein is Oncostatin-M (OSM).